Reading from the N-terminus, the 136-residue chain is uncharacterized protein (136 aa).

The interval 1–100 is disordered; it reads MQSREPSGWR…PCSGGPDRPE (100 aa). Residues 66-75 show a composition bias toward basic residues; sequence RLLRWHHRVP.

This is an uncharacterized protein from Homo sapiens (Human).